A 776-amino-acid chain; its full sequence is MTAETRILELRAELDQHNYRYYVLDEPSVPDAEYDRLFNELKALEAEHPHLVTPDSPTQRVGGAALAAFSQVRHEVPMLSLGNAFEEADLREFGRRVVEGLDQPGAVDYSCEPKLDGLAVSLLYRDGQLVQGATRGDGTTGEDISANVRTVRNIPLKLQGKGWPAVLEVRGEVYMSKAGFDRLNAAQAEAGGKTFANPRNAAAGSLRQLDSKITASRPLEFCCYGVGQLSESIGDSHIGILEQLKAWGLPISRELKHAAGIEECLAYYRDIGERRNSLPYEIDGVVFKVNSLAAQRELGFRAREPRWAIAHKFPAMEELTEVLDVEFQVGRTGAVTPVARLKPVKVAGVTVSNATLHNMDEIARLGLRIGDTVIIRRAGDVIPQVMQVVLERRPQDARPVEVPSECPVCGSQVERTQLVKRSKGKETTSEGAVYRCVGRLACGAQLKQAIIHYVSRRAMDIDGLGEKSVEQLVDEGLIGSPADLYKLQFEQVVGLEGFAEVSTQKLLDAIEASKRPSLARFIYALGIPDVGEETAKVLARSLGSLARVQQALPQVLTYLPDIGLEVAYEIHNFFEDEHNQKVIQQLLDSGMQLQDEGELAAEFAASTTLAGMIAKLDIASVGPTGAEKLVAKLDSLDKIIAADGIDLRQALAAKQADAVREFFKDEANQKLARDIEAQLLAFGMHWSSEKKVAEGLPLAGQTWVLTGTLERMSRDIAKDKLESLGAKVAGSVSGKTHCVVAGPGAGSKLAKAAELGVKVLDEDAFVTFLAEQGIAV.

NAD(+) is bound by residues 31-35 (DAEYD), 80-81 (SL), and glutamate 112. Residue lysine 114 is the N6-AMP-lysine intermediate of the active site. NAD(+) is bound by residues arginine 135, glutamate 172, lysine 288, and lysine 312. Residues cysteine 406, cysteine 409, cysteine 436, and cysteine 442 each contribute to the Zn(2+) site. The region spanning 693–776 (AEGLPLAGQT…TFLAEQGIAV (84 aa)) is the BRCT domain.

Belongs to the NAD-dependent DNA ligase family. LigA subfamily. Mg(2+) is required as a cofactor. It depends on Mn(2+) as a cofactor.

It carries out the reaction NAD(+) + (deoxyribonucleotide)n-3'-hydroxyl + 5'-phospho-(deoxyribonucleotide)m = (deoxyribonucleotide)n+m + AMP + beta-nicotinamide D-nucleotide.. Its function is as follows. DNA ligase that catalyzes the formation of phosphodiester linkages between 5'-phosphoryl and 3'-hydroxyl groups in double-stranded DNA using NAD as a coenzyme and as the energy source for the reaction. It is essential for DNA replication and repair of damaged DNA. This chain is DNA ligase, found in Pseudomonas putida (strain ATCC 700007 / DSM 6899 / JCM 31910 / BCRC 17059 / LMG 24140 / F1).